Here is an 835-residue protein sequence, read N- to C-terminus: Protein translocase subunit SecA (835 aa).

ATP-binding positions include Q85, 103-107 (GEGKT), and D492. Residues 788 to 807 (VQGEAVHPSSDGEEAKKKPV) are disordered. Zn(2+) is bound by residues C819, C821, C830, and C831.

It belongs to the SecA family. In terms of assembly, monomer and homodimer. Part of the essential Sec protein translocation apparatus which comprises SecA, SecYEG and auxiliary proteins SecDF. Other proteins may also be involved. Zn(2+) serves as cofactor.

The protein localises to the cell membrane. Its subcellular location is the cytoplasm. It carries out the reaction ATP + H2O + cellular proteinSide 1 = ADP + phosphate + cellular proteinSide 2.. Part of the Sec protein translocase complex. Interacts with the SecYEG preprotein conducting channel. Has a central role in coupling the hydrolysis of ATP to the transfer of proteins into and across the cell membrane, serving as an ATP-driven molecular motor driving the stepwise translocation of polypeptide chains across the membrane. The chain is Protein translocase subunit SecA from Bacillus cereus (strain ATCC 14579 / DSM 31 / CCUG 7414 / JCM 2152 / NBRC 15305 / NCIMB 9373 / NCTC 2599 / NRRL B-3711).